A 463-amino-acid polypeptide reads, in one-letter code: DNA polymerase subunit gamma-2, mitochondrial (463 aa).

Residues 1 to 44 (MLLTLKNTGQLLVAACSKVARSLAKYHPRVNHHRHCVWCSKRGL) constitute a mitochondrion transit peptide.

As to quaternary structure, heterotrimer composed of a catalytic subunit and a homodimer of accessory subunits.

The protein resides in the mitochondrion. Functionally, mitochondrial polymerase processivity subunit. It regulates the polymerase and exonuclease activities promoting processive DNA synthesis. Binds to ss-DNA. This is DNA polymerase subunit gamma-2, mitochondrial (polg2) from Xenopus laevis (African clawed frog).